Reading from the N-terminus, the 102-residue chain is Small ribosomal subunit protein uS10 (102 aa).

Belongs to the universal ribosomal protein uS10 family. In terms of assembly, part of the 30S ribosomal subunit.

Involved in the binding of tRNA to the ribosomes. The protein is Small ribosomal subunit protein uS10 of Exiguobacterium sibiricum (strain DSM 17290 / CCUG 55495 / CIP 109462 / JCM 13490 / 255-15).